The following is a 127-amino-acid chain: Large ribosomal subunit protein eL22x (127 aa).

The protein belongs to the eukaryotic ribosomal protein eL22 family.

This is Large ribosomal subunit protein eL22x (RPL22A) from Arabidopsis thaliana (Mouse-ear cress).